The following is a 263-amino-acid chain: Pyruvate formate-lyase-activating enzyme (263 aa).

A Radical SAM core domain is found at 23-260 (VDGPGIRFVV…TETYEEYKKR (238 aa)). Cys-37, Cys-41, and Cys-44 together coordinate [4Fe-4S] cluster. Residues 43 to 45 (YCH), Gly-87, 142 to 144 (DIK), and His-215 contribute to the S-adenosyl-L-methionine site.

Belongs to the organic radical-activating enzymes family. [4Fe-4S] cluster is required as a cofactor.

Its subcellular location is the cytoplasm. The catalysed reaction is glycyl-[formate C-acetyltransferase] + reduced [flavodoxin] + S-adenosyl-L-methionine = glycin-2-yl radical-[formate C-acetyltransferase] + semiquinone [flavodoxin] + 5'-deoxyadenosine + L-methionine + H(+). Functionally, activation of pyruvate formate-lyase under anaerobic conditions by generation of an organic free radical, using S-adenosylmethionine and reduced flavodoxin as cosubstrates to produce 5'-deoxy-adenosine. The polypeptide is Pyruvate formate-lyase-activating enzyme (act) (Streptococcus mutans serotype c (strain ATCC 700610 / UA159)).